Here is a 391-residue protein sequence, read N- to C-terminus: Probable protein arginine N-methyltransferase 6.1 (391 aa).

The disordered stretch occupies residues 1–35; it reads MLPSHLNGHSPLARRCPRLSAASPPATGDSDAAAA. Residues 20–35 show a composition bias toward low complexity; sequence SAASPPATGDSDAAAA. The SAM-dependent MTase PRMT-type domain occupies 45–391; it reads DRIYFQSYSH…QTLVKDYAMR (347 aa). S-adenosyl-L-methionine contacts are provided by His58, Arg67, Gly91, Glu113, and Glu142. Active-site residues include Glu156 and Glu165.

The protein belongs to the class I-like SAM-binding methyltransferase superfamily. Protein arginine N-methyltransferase family. PRMT6 subfamily.

Functionally, arginine methyltransferase that can both catalyze the formation of omega-N monomethylarginine (MMA) and asymmetrical dimethylarginine (aDMA). This chain is Probable protein arginine N-methyltransferase 6.1 (PRMT6.1), found in Oryza sativa subsp. japonica (Rice).